The chain runs to 164 residues: MLMPTYFLLPLLLLLGGPRTSLSHKFYNTGPVFSCLNTALSEVKKNKLEDVPLLSKKSFGHLPTQDPSGEEDDNQTHLQIKRTFSGAAGGNGAGSTRYRYQSQAQHKGKLYPDKPKSDRGTKFTLSLDVPTNIMNILFNIDKAKNLRAKAAANAQLMAQIGKKK.

The N-terminal stretch at 1–23 (MLMPTYFLLPLLLLLGGPRTSLS) is a signal peptide. Positions 24-121 (HKFYNTGPVF…PDKPKSDRGT (98 aa)) are excised as a propeptide. Positions 58-120 (SFGHLPTQDP…YPDKPKSDRG (63 aa)) are disordered. Positions 110 to 120 (LYPDKPKSDRG) are enriched in basic and acidic residues. Ile160 is subject to Isoleucine amide.

The protein belongs to the sauvagine/corticotropin-releasing factor/urotensin I family. Binds with high affinity to CRF receptors 2-alpha and 2-beta. Expressed in some areas of the brain including the hypothalamus, amygdala, and brainstem, but is not evident in the cerebellum, pituitary, or cerebral cortex; it is also expressed peripherally in small intestine and skin.

It localises to the secreted. Functionally, suppresses food intake, delays gastric emptying and decreases heat-induced edema. Might represent an endogenous ligand for maintaining homeostasis after stress. The polypeptide is Urocortin-3 (Ucn3) (Mus musculus (Mouse)).